The following is a 2703-amino-acid chain: Serine/arginine repetitive matrix protein 2 (2703 aa).

N-acetylmethionine is present on methionine 1. Residues 60 to 92 (HERKRRVELRCLELEEMMEEQGYEEQQIQEKVA) are a coiled coil. Lysine 101 is modified (N6-acetyllysine). Glycyl lysine isopeptide (Lys-Gly) (interchain with G-Cter in SUMO2) cross-links involve residues lysine 108 and lysine 130. The interval 141 to 1007 (ISDSYVDGSS…SGSFHLCPGV (867 aa)) is disordered. Tyrosine 145 bears the Phosphotyrosine mark. At lysine 169 the chain carries N6-acetyllysine. 2 stretches are compositionally biased toward basic residues: residues 186 to 197 (KQKKKKKKKDRG) and 207 to 249 (RERK…KRSR). The interval 197–259 (GRRSESSSPR…STTPAPKSRR (63 aa)) is sufficient for RNA-binding. Serine 220 and serine 222 each carry phosphoserine. The segment covering 263 to 284 (STSADSASSSDTSRSRSRSAAA) has biased composition (low complexity). Phosphoserine is present on residues serine 295, serine 300, serine 310, serine 322, and serine 323. The span at 319-334 (QQPSSPAPSTKQSSSP) shows a compositional bias: low complexity. Positions 335–345 (YEDKDKKEKSA) are enriched in basic and acidic residues. A phosphoserine mark is found at serine 349, serine 351, serine 355, and serine 356. 2 positions are modified to phosphothreonine: threonine 357 and threonine 365. 20 positions are modified to phosphoserine: serine 375, serine 385, serine 393, serine 396, serine 402, serine 406, serine 422, serine 433, serine 434, serine 435, serine 438, serine 452, serine 482, serine 484, serine 503, serine 505, serine 507, serine 531, serine 533, and serine 540. The span at 383–396 (PSSQEPVNPSSEAS) shows a compositional bias: polar residues. The segment covering 425–437 (PTKGSRHASSSPE) has biased composition (polar residues). Residues 459–533 (NRSHGRAKRD…SPQRRGRSRS (75 aa)) show a composition bias toward basic residues. Over residues 534–543 (PQRPGWSRSR) the composition is skewed to low complexity. 3 stretches are compositionally biased toward basic residues: residues 544–561 (NTQR…RSHS), 568–721 (GRSR…RRGR), and 730–740 (NKSRTSQRRSR). Residues serine 700, serine 702, and serine 704 each carry the phosphoserine modification. A phosphoserine mark is found at serine 773, serine 775, and serine 778. Over residues 785-817 (SQTPTRRSRSGSSPPKQKSKTPPRQSRSNSPQP) the composition is skewed to low complexity. Serine 821 and serine 829 each carry phosphoserine. Polar residues-rich tracts occupy residues 829-851 (SVTN…SESS) and 859-874 (RTPS…PRVK). A phosphothreonine mark is found at threonine 831 and threonine 841. Residues serine 846, serine 850, and serine 851 each carry the phosphoserine modification. Composition is skewed to low complexity over residues 875 to 891 (SSTP…SPQP) and 898 to 919 (SPRG…TSRT). 11 positions are modified to phosphoserine: serine 882, serine 909, serine 924, serine 926, serine 928, serine 940, serine 942, serine 944, serine 945, serine 946, and serine 949. At threonine 955 the chain carries Phosphothreonine. Polar residues predominate over residues 960–1000 (SGSTSPYLKSMLQTPPDQNLSGSKSPCPQKSRDSPTGSSGS). Residues serine 962 and serine 964 each carry the phosphoserine modification. At tyrosine 966 the chain carries Phosphotyrosine. Residue threonine 973 is modified to Phosphothreonine. A phosphoserine mark is found at serine 980, serine 984, and serine 993. Threonine 995 carries the post-translational modification Phosphothreonine. Phosphoserine occurs at positions 997, 1000, 1011, 1037, and 1038. Residues 1024 to 1057 (VQQKGHTQTWPDTSSPEVMQTQVESPLLQSKSQT) show a composition bias toward polar residues. Positions 1024–1112 (VQQKGHTQTW…TKPDSSIYPL (89 aa)) are disordered. Threonine 1044 bears the Phosphothreonine mark. Phosphoserine occurs at positions 1048, 1064, 1066, 1067, and 1068. Residues 1058–1068 (SPKGSLSRSSS) are compositionally biased toward low complexity. The residue at position 1071 (threonine 1071) is a Phosphothreonine. 27 positions are modified to phosphoserine: serine 1077, serine 1087, serine 1094, serine 1097, serine 1117, serine 1151, serine 1159, serine 1175, serine 1188, serine 1216, serine 1225, serine 1229, serine 1230, serine 1269, serine 1276, serine 1278, serine 1284, serine 1287, serine 1294, serine 1305, serine 1325, serine 1338, serine 1339, serine 1340, serine 1343, serine 1359, and serine 1360. Residues 1079–1092 (VKQDKSEISTDPKL) show a composition bias toward basic and acidic residues. The segment at 1136-2092 (IQEDVASSCI…RSPGMLEPLG (957 aa)) is disordered. The segment covering 1146–1158 (PRDKFSPTQDRPE) has biased composition (basic and acidic residues). Residues 1270–1284 (PEHKELSHSPPRENS) show a composition bias toward basic and acidic residues. The span at 1285 to 1304 (FESSLEFKNSGPVSEVNTGF) shows a compositional bias: polar residues. Position 1370 is a phosphothreonine (threonine 1370). Basic and acidic residues predominate over residues 1371-1387 (PSRERSSSASPELKDGL). Serine 1372, serine 1378, and serine 1380 each carry phosphoserine. Threonine 1390 carries the phosphothreonine modification. The span at 1397 to 1408 (SGSSPGLRDGSG) shows a compositional bias: low complexity. Phosphoserine is present on residues serine 1400 and serine 1407. A Phosphothreonine modification is found at threonine 1409. Over residues 1409 to 1431 (TPSRHSLSGSSPGMKDTPQTPSR) the composition is skewed to polar residues. Phosphoserine occurs at positions 1414, 1416, 1418, and 1419. Threonine 1428 bears the Phosphothreonine mark. Residues serine 1438 and serine 1439 each carry the phosphoserine modification. At threonine 1448 the chain carries Phosphothreonine. Phosphoserine occurs at positions 1453, 1455, 1457, 1458, and 1465. The segment covering 1454–1468 (HSPSSPERNNKSVTP) has biased composition (polar residues). Phosphothreonine is present on threonine 1467. A phosphoserine mark is found at serine 1473, serine 1475, serine 1477, and serine 1478. Residues 1475-1489 (SESSVEQKNLARTSP) are compositionally biased toward polar residues. Threonine 1487 is modified (phosphothreonine). A compositionally biased stretch (low complexity) spans 1490 to 1499 (GQRSRSGSSQ). Phosphoserine is present on residues serine 1493, serine 1495, serine 1497, serine 1498, and serine 1508. Basic and acidic residues predominate over residues 1511–1523 (ERSESDSSPDSKP). Basic residues predominate over residues 1524 to 1533 (KTRTPLRQRS). Phosphoserine is present on residues serine 1533, serine 1535, serine 1537, serine 1538, serine 1554, serine 1556, serine 1557, serine 1572, serine 1576, serine 1577, serine 1604, serine 1614, serine 1647, serine 1649, and serine 1650. Residues 1604–1613 (SPEGSSSSES) are compositionally biased toward low complexity. Residues 1637 to 1647 (KSHTPPRRRSS) are compositionally biased toward basic residues. The residue at position 1654 (threonine 1654) is a Phosphothreonine. Serine 1683, serine 1685, serine 1687, serine 1688, serine 1718, and serine 1720 each carry phosphoserine. Composition is skewed to basic residues over residues 1725–1745 (GLQR…RRRD) and 1754–1772 (SRRR…RRRG). 6 positions are modified to phosphoserine: serine 1774, serine 1778, serine 1810, serine 1813, serine 1832, and serine 1834. The span at 1776–1789 (YHSRSPTRQESSRT) shows a compositional bias: low complexity. The segment covering 1790–1810 (SSRRRRGRSRTPLTSRKRSRS) has biased composition (basic residues). Basic residues predominate over residues 1818–2020 (KRSRSRASPA…PRAARGKRSL (203 aa)). Residue threonine 1836 is modified to Phosphothreonine. Residues serine 1840 and serine 1846 each carry the phosphoserine modification. Threonine 1848 carries the phosphothreonine modification. Phosphoserine occurs at positions 1849, 1869, 1872, 1876, and 1878. Phosphothreonine occurs at positions 1880 and 1884. A phosphoserine mark is found at serine 1898 and serine 1900. Threonine 1902 and threonine 1906 each carry phosphothreonine. Phosphoserine is present on residues serine 1910 and serine 1912. Threonine 1914 and threonine 1918 each carry phosphothreonine. Phosphoserine occurs at positions 1922, 1924, and 1927. Phosphothreonine is present on threonine 1930. Phosphoserine occurs at positions 1936, 1939, 1948, 1951, 1960, 1963, 1970, and 1972. Residue threonine 1974 is modified to Phosphothreonine. A phosphoserine mark is found at serine 1982 and serine 1984. Phosphothreonine is present on threonine 1986. Residues serine 1994, serine 1996, serine 1998, and serine 2019 each carry the phosphoserine modification. A Phosphothreonine modification is found at threonine 2021. The segment covering 2022–2047 (RSPPAIRRRSASGSSSDRSRSATPPA) has biased composition (low complexity). Phosphoserine occurs at positions 2023 and 2042. Position 2044 is a phosphothreonine (threonine 2044). Serine 2052 and serine 2054 each carry phosphoserine. At threonine 2056 the chain carries Phosphothreonine. Over residues 2062–2076 (SSSRMSCFSRPSMSP) the composition is skewed to low complexity. 4 positions are modified to phosphoserine: serine 2070, serine 2073, serine 2075, and serine 2084. Phosphothreonine is present on threonine 2096. An omega-N-methylarginine mark is found at arginine 2146, arginine 2159, arginine 2183, and arginine 2198. The residue at position 2224 (serine 2224) is a Phosphoserine. 2 positions are modified to omega-N-methylarginine: arginine 2226 and arginine 2240. 2 positions are modified to phosphothreonine: threonine 2241 and threonine 2254. At serine 2262 the chain carries Phosphoserine. The segment at 2263–2703 (LTGSGTPPTA…SNRHRSSRSP (441 aa)) is disordered. Threonine 2268 and threonine 2281 each carry phosphothreonine. Residues 2269 to 2283 (PPTAANYPSSSRTPQ) show a composition bias toward polar residues. Arginine 2295 carries the post-translational modification Omega-N-methylarginine. Residues serine 2296, serine 2321, and serine 2329 each carry the phosphoserine modification. Phosphothreonine is present on threonine 2334. The residue at position 2335 (serine 2335) is a Phosphoserine. The residue at position 2337 (arginine 2337) is an Asymmetric dimethylarginine; alternate. Arginine 2337 bears the Omega-N-methylarginine; alternate mark. Phosphoserine occurs at positions 2347, 2351, and 2360. At threonine 2362 the chain carries Phosphothreonine. Phosphoserine occurs at positions 2365, 2368, 2381, 2384, 2404, and 2408. Composition is skewed to polar residues over residues 2410-2443 (FSDQ…SASD) and 2467-2476 (TGAQQPSTLA). Over residues 2487-2521 (SSSSSSSSSSSSSSSSSSSSSSSSGSSSSDSEGSS) the composition is skewed to low complexity. Phosphoserine is present on serine 2535. Residue threonine 2537 is modified to Phosphothreonine. Residue lysine 2541 forms a Glycyl lysine isopeptide (Lys-Gly) (interchain with G-Cter in SUMO2) linkage. Threonine 2553 carries the phosphothreonine modification. The span at 2562–2602 (SSSSSSSSSSSSSSSSSSSSSSSSSSSSSSSSSSSSSSSSS) shows a compositional bias: low complexity. Positions 2605 to 2622 (PAKPGPQALPKPASPKKP) are enriched in pro residues. Phosphoserine occurs at positions 2618, 2629, 2631, 2638, 2642, 2644, 2646, 2648, 2656, and 2660. The span at 2623 to 2643 (PPGERRSRSPRKPIDSLRDSR) shows a compositional bias: basic and acidic residues. Threonine 2689 carries the phosphothreonine modification. Serine 2691 carries the phosphoserine modification. The span at 2694–2703 (SNRHRSSRSP) shows a compositional bias: basic residues.

This sequence belongs to the CWC21 family. Component of pre-catalytic, catalytic and post-catalytic spliceosome complexes. Found in a pre-mRNA splicing complex with SFRS4, SFRS5, SNRP70, SNRPA1, SRRM1 and SRRM2. Component of the minor spliceosome, which splices U12-type introns. Interacts with DHX8. Interacts with CACTIN.

Its subcellular location is the nucleus. It is found in the nucleus speckle. Functionally, required for pre-mRNA splicing as component of the spliceosome. As a component of the minor spliceosome, involved in the splicing of U12-type introns in pre-mRNAs. The protein is Serine/arginine repetitive matrix protein 2 (Srrm2) of Mus musculus (Mouse).